A 512-amino-acid chain; its full sequence is Glucose-6-phosphate 1-dehydrogenase (512 aa).

NADP(+) is bound by residues Arg61, 103–104, and Lys171; that span reads EF. Residues His201, Lys205, Glu239, and Asp258 each coordinate substrate. His263 functions as the Proton acceptor in the catalytic mechanism. Lys360 and Lys365 together coordinate substrate. The tract at residues 479-512 is disordered; it reads QDSSPSFPNYPAGSSGPKEADALIERDGRSWRPL. Basic and acidic residues predominate over residues 496-512; it reads KEADALIERDGRSWRPL.

This sequence belongs to the glucose-6-phosphate dehydrogenase family.

It carries out the reaction D-glucose 6-phosphate + NADP(+) = 6-phospho-D-glucono-1,5-lactone + NADPH + H(+). It participates in carbohydrate degradation; pentose phosphate pathway; D-ribulose 5-phosphate from D-glucose 6-phosphate (oxidative stage): step 1/3. Functionally, catalyzes the oxidation of glucose 6-phosphate to 6-phosphogluconolactone. This Chlamydia pneumoniae (Chlamydophila pneumoniae) protein is Glucose-6-phosphate 1-dehydrogenase.